A 258-amino-acid chain; its full sequence is 5'-nucleotidase SurE (258 aa).

4 residues coordinate a divalent metal cation: Asp9, Asp10, Ser42, and Asn96.

Belongs to the SurE nucleotidase family. A divalent metal cation serves as cofactor.

The protein resides in the cytoplasm. The catalysed reaction is a ribonucleoside 5'-phosphate + H2O = a ribonucleoside + phosphate. Functionally, nucleotidase that shows phosphatase activity on nucleoside 5'-monophosphates. The sequence is that of 5'-nucleotidase SurE from Campylobacter jejuni subsp. jejuni serotype O:2 (strain ATCC 700819 / NCTC 11168).